The sequence spans 1103 residues: Mediator of RNA polymerase II transcription subunit 14 (1103 aa).

Disordered stretches follow at residues 22–61 (LNGVSSAPAGSSQLGNPVGLHNGSLPTNGVQHPDSRGSDE) and 1043–1067 (TTPKALDSRTSHDAPAANNQSPAIR). Positions 23-36 (NGVSSAPAGSSQLG) are enriched in polar residues.

This sequence belongs to the Mediator complex subunit 14 family. In terms of assembly, component of the Mediator complex.

The protein resides in the nucleus. Component of the Mediator complex, a coactivator involved in the regulated transcription of nearly all RNA polymerase II-dependent genes. Mediator functions as a bridge to convey information from gene-specific regulatory proteins to the basal RNA polymerase II transcription machinery. Mediator is recruited to promoters by direct interactions with regulatory proteins and serves as a scaffold for the assembly of a functional preinitiation complex with RNA polymerase II and the general transcription factors. The chain is Mediator of RNA polymerase II transcription subunit 14 (rgr1) from Emericella nidulans (strain FGSC A4 / ATCC 38163 / CBS 112.46 / NRRL 194 / M139) (Aspergillus nidulans).